Consider the following 264-residue polypeptide: 3-methyl-2-oxobutanoate hydroxymethyltransferase (264 aa).

Mg(2+)-binding residues include D45 and D84. 3-methyl-2-oxobutanoate is bound by residues 45–46, D84, and K112; that span reads DS. E114 serves as a coordination point for Mg(2+). The active-site Proton acceptor is the E181.

It belongs to the PanB family. In terms of assembly, homodecamer; pentamer of dimers. Mg(2+) serves as cofactor.

Its subcellular location is the cytoplasm. The catalysed reaction is 3-methyl-2-oxobutanoate + (6R)-5,10-methylene-5,6,7,8-tetrahydrofolate + H2O = 2-dehydropantoate + (6S)-5,6,7,8-tetrahydrofolate. It participates in cofactor biosynthesis; (R)-pantothenate biosynthesis; (R)-pantoate from 3-methyl-2-oxobutanoate: step 1/2. In terms of biological role, catalyzes the reversible reaction in which hydroxymethyl group from 5,10-methylenetetrahydrofolate is transferred onto alpha-ketoisovalerate to form ketopantoate. The chain is 3-methyl-2-oxobutanoate hydroxymethyltransferase from Shewanella sp. (strain MR-7).